Consider the following 240-residue polypeptide: UDP-2,3-diacylglucosamine hydrolase (240 aa).

Positions 8, 10, 41, 79, and 114 each coordinate Mn(2+). Residue 79-80 (NR) coordinates substrate. Residues Asp-122, Ser-160, Asn-164, Lys-167, and His-195 each coordinate substrate. Residues His-195 and His-197 each contribute to the Mn(2+) site.

This sequence belongs to the LpxH family. Mn(2+) serves as cofactor.

The protein resides in the cell inner membrane. It carries out the reaction UDP-2-N,3-O-bis[(3R)-3-hydroxytetradecanoyl]-alpha-D-glucosamine + H2O = 2-N,3-O-bis[(3R)-3-hydroxytetradecanoyl]-alpha-D-glucosaminyl 1-phosphate + UMP + 2 H(+). The protein operates within glycolipid biosynthesis; lipid IV(A) biosynthesis; lipid IV(A) from (3R)-3-hydroxytetradecanoyl-[acyl-carrier-protein] and UDP-N-acetyl-alpha-D-glucosamine: step 4/6. Hydrolyzes the pyrophosphate bond of UDP-2,3-diacylglucosamine to yield 2,3-diacylglucosamine 1-phosphate (lipid X) and UMP by catalyzing the attack of water at the alpha-P atom. Involved in the biosynthesis of lipid A, a phosphorylated glycolipid that anchors the lipopolysaccharide to the outer membrane of the cell. The sequence is that of UDP-2,3-diacylglucosamine hydrolase from Escherichia coli O6:K15:H31 (strain 536 / UPEC).